The following is a 222-amino-acid chain: Prolactin-2C5 (222 aa).

An N-terminal signal peptide occupies residues 1 to 29 (MLPSLIQPCSWILLLLLVNSSLLWKNVAS). The cysteines at positions 33 and 40 are disulfide-linked. An N-linked (GlcNAc...) asparagine glycan is attached at Asn-57. 2 cysteine pairs are disulfide-bonded: Cys-87–Cys-197 and Cys-214–Cys-222.

It belongs to the somatotropin/prolactin family. N-glycosylated and sialylated. Expressed in placenta (at protein level). Expressed in the tail hair follicle, with highest expression detected in the keratinocytes of the outer root sheath. Expressed in ear skin with lesser amounts in small intestine. Not detected in brain at 18 dpc, postnatal day 25 or postnatal day 55.

It localises to the secreted. The polypeptide is Prolactin-2C5 (Mus musculus (Mouse)).